Reading from the N-terminus, the 22-residue chain is Heliocin (22 aa).

The residue at position 1 (Gln1) is a Pyrrolidone carboxylic acid. Residues 1 to 22 form a disordered region; that stretch reads QRFIHPTYRPPPQPRRPVIMRA. O-linked (GalNAc...) threonine glycosylation occurs at Thr7.

In terms of assembly, monomer. Hemolymph.

It is found in the secreted. Has antibacterial activity, preferentially against Gram-negative bacteria. The polypeptide is Heliocin (Heliothis virescens (Tobacco budworm moth)).